The chain runs to 420 residues: Serine/threonine-protein phosphatase 4 regulatory subunit 2-A (420 aa).

Positions 157–420 (GNTSAFPDRN…ETADDNMEQD (264 aa)) are disordered. Over residues 182–195 (SLSSNVATNGLPDS) the composition is skewed to polar residues. Over residues 196–210 (TESKEQASEQSERTV) the composition is skewed to basic and acidic residues. A compositionally biased stretch (low complexity) spans 212–224 (ESSASEAESHSGA). A compositionally biased stretch (basic and acidic residues) spans 229–250 (HRDDEDATHAETHEAKRLKFDK). Positions 251 to 266 (EEEEEEDDEEEDEDGD) are enriched in acidic residues. Residues 267-276 (EIKKELDEPH) are compositionally biased toward basic and acidic residues. Residues 278 to 296 (PCTSVAESSSDVPQSSTDV) are compositionally biased toward polar residues. A compositionally biased stretch (basic and acidic residues) spans 318–332 (GVDRSTSEDSPDPSH). The segment covering 346–364 (AEEEEEEESAEAQETEETN) has biased composition (acidic residues). The span at 368 to 394 (SSSSNNSSDEGVSSAETPSASPSSSTE) shows a compositional bias: low complexity. Acidic residues predominate over residues 411 to 420 (ETADDNMEQD).

It belongs to the PPP4R2 family. In terms of assembly, serine/threonine-protein phosphatase 4 (PP4) occurs in different assemblies of the catalytic and one or more regulatory subunits.

In terms of biological role, regulatory subunit of serine/threonine-protein phosphatase 4 (PP4C). This Danio rerio (Zebrafish) protein is Serine/threonine-protein phosphatase 4 regulatory subunit 2-A (ppp4r2a).